A 131-amino-acid chain; its full sequence is MIVRNVKDVMGTEDEVRTDTWVSRRVLLKKDGMGFSFHETTIFPGTRTHIHYKNHLEAVWCIEGDGSIETIADGKTYELGPGVVYALNENDEHWLCGGKQPLRVICVFNPPLTGQEVHDAEGVYALVEEAA.

This sequence belongs to the ectoine synthase family.

The enzyme catalyses (2S)-4-acetamido-2-aminobutanoate = L-ectoine + H2O. Its pathway is amine and polyamine biosynthesis; ectoine biosynthesis; L-ectoine from L-aspartate 4-semialdehyde: step 3/3. Its function is as follows. Catalyzes the circularization of gamma-N-acetyl-alpha,gamma-diaminobutyric acid (ADABA) to ectoine (1,4,5,6-tetrahydro-2-methyl-4-pyrimidine carboxylic acid), which is an excellent osmoprotectant. This chain is L-ectoine synthase, found in Bordetella bronchiseptica (strain ATCC BAA-588 / NCTC 13252 / RB50) (Alcaligenes bronchisepticus).